The chain runs to 471 residues: tRNA modification GTPase MnmE (471 aa).

Residues R26, E83, and K136 each contribute to the (6S)-5-formyl-5,6,7,8-tetrahydrofolate site. The TrmE-type G domain occupies 232 to 393; the sequence is GLRVVLAGQP…LRRRLLQLAG (162 aa). A K(+)-binding site is contributed by N242. GTP contacts are provided by residues 242–247, 261–267, 286–289, 354–357, and 374–376; these read NVGKSS, TPIAGTT, DTAG, NKAD, and SAR. Residue S246 participates in Mg(2+) binding. Positions 261, 263, and 266 each coordinate K(+). Position 267 (T267) interacts with Mg(2+). K471 is a binding site for (6S)-5-formyl-5,6,7,8-tetrahydrofolate.

The protein belongs to the TRAFAC class TrmE-Era-EngA-EngB-Septin-like GTPase superfamily. TrmE GTPase family. Homodimer. Heterotetramer of two MnmE and two MnmG subunits. K(+) serves as cofactor.

The protein localises to the cytoplasm. Its function is as follows. Exhibits a very high intrinsic GTPase hydrolysis rate. Involved in the addition of a carboxymethylaminomethyl (cmnm) group at the wobble position (U34) of certain tRNAs, forming tRNA-cmnm(5)s(2)U34. The protein is tRNA modification GTPase MnmE of Methylibium petroleiphilum (strain ATCC BAA-1232 / LMG 22953 / PM1).